A 341-amino-acid chain; its full sequence is Anthranilate phosphoribosyltransferase (341 aa).

5-phospho-alpha-D-ribose 1-diphosphate contacts are provided by residues Gly-82, 85 to 86 (GD), Thr-90, 92 to 95 (NIST), 110 to 118 (KHGGRSVSG), and Ser-122. Residue Gly-82 coordinates anthranilate. Ser-94 serves as a coordination point for Mg(2+). Residue Arg-168 coordinates anthranilate. Mg(2+)-binding residues include Asp-227 and Glu-228.

This sequence belongs to the anthranilate phosphoribosyltransferase family. In terms of assembly, homodimer. Requires Mg(2+) as cofactor.

The catalysed reaction is N-(5-phospho-beta-D-ribosyl)anthranilate + diphosphate = 5-phospho-alpha-D-ribose 1-diphosphate + anthranilate. It participates in amino-acid biosynthesis; L-tryptophan biosynthesis; L-tryptophan from chorismate: step 2/5. Its function is as follows. Catalyzes the transfer of the phosphoribosyl group of 5-phosphorylribose-1-pyrophosphate (PRPP) to anthranilate to yield N-(5'-phosphoribosyl)-anthranilate (PRA). This is Anthranilate phosphoribosyltransferase from Nitrosomonas europaea (strain ATCC 19718 / CIP 103999 / KCTC 2705 / NBRC 14298).